The sequence spans 208 residues: Peptidyl-tRNA hydrolase (208 aa).

Tyrosine 19 contributes to the tRNA binding site. Catalysis depends on histidine 24, which acts as the Proton acceptor. TRNA-binding residues include phenylalanine 71, asparagine 73, and asparagine 119.

This sequence belongs to the PTH family. As to quaternary structure, monomer.

It is found in the cytoplasm. The catalysed reaction is an N-acyl-L-alpha-aminoacyl-tRNA + H2O = an N-acyl-L-amino acid + a tRNA + H(+). Functionally, hydrolyzes ribosome-free peptidyl-tRNAs (with 1 or more amino acids incorporated), which drop off the ribosome during protein synthesis, or as a result of ribosome stalling. Catalyzes the release of premature peptidyl moieties from peptidyl-tRNA molecules trapped in stalled 50S ribosomal subunits, and thus maintains levels of free tRNAs and 50S ribosomes. The chain is Peptidyl-tRNA hydrolase from Synechococcus elongatus (strain ATCC 33912 / PCC 7942 / FACHB-805) (Anacystis nidulans R2).